The sequence spans 123 residues: Dihydroneopterin triphosphate 2'-epimerase (123 aa).

Belongs to the DHNA family. As to quaternary structure, homooctamer. Dimer of tetramers.

It carries out the reaction 7,8-dihydroneopterin 3'-triphosphate = 7,8-dihydromonapterin 3'-triphosphate. Catalyzes the epimerization of carbon 2' of the side chain of 7,8-dihydroneopterin triphosphate (H2NTP) to form 7,8-dihydromonapterin triphosphate (H2MTP). Is required for tetrahydromonapterin biosynthesis. This chain is Dihydroneopterin triphosphate 2'-epimerase, found in Pseudomonas aeruginosa (strain ATCC 15692 / DSM 22644 / CIP 104116 / JCM 14847 / LMG 12228 / 1C / PRS 101 / PAO1).